A 1052-amino-acid polypeptide reads, in one-letter code: Germline survival defective-1 (1052 aa).

An N-terminal signal peptide occupies residues 1-25 (MRCLISYLFHSFLIFLKFIRSDVTA). 5 disordered regions span residues 41–320 (LMKS…DPKN), 478–543 (VNGI…QSVP), 667–689 (PSSQ…EEFE), 933–965 (KQTL…NSYA), and 1033–1052 (SNNT…NSNF). A compositionally biased stretch (low complexity) spans 67 to 145 (ATATAAATTQ…SSTSSTSQQT (79 aa)). The span at 163–172 (TSNTANSQSG) shows a compositional bias: polar residues. The span at 178–190 (TNKDRPKEKEKNT) shows a compositional bias: basic and acidic residues. Residues 244-279 (NAKSSGFLSNSSLSSAGQISASSAPPVSTTPTAIPI) show a composition bias toward low complexity. A compositionally biased stretch (basic and acidic residues) spans 305 to 320 (KRDEEPMPYKSTDPKN). A gld-4 binding region spans residues 424–732 (QHPPGLPPLL…QIEKNDNLFS (309 aa)). A compositionally biased stretch (polar residues) spans 480–514 (GISNNIPSDRQQLDSKPNTARGSSGNINQSNTTSP). The segment covering 674–689 (DENDTDSDHESEEEFE) has biased composition (acidic residues). The segment at 892-1052 (PIELPVNMQP…SGGGNQNSNF (161 aa)) is gld-3 binding. Residues 950-963 (EGSQQNGGTSSSNS) show a composition bias toward low complexity. Gly residues predominate over residues 1038-1052 (GVNGNSGGGNQNSNF).

In terms of assembly, isoform C interacts (via C-terminus) with gld-3 isoform A (via C-terminus) in an RNA-independent manner. Isoform C interacts with gld-4. Expressed in the germline (at protein level). In the early embryo is expressed in all cells, then becomes gradually restricted to the germ cell lineage and enriches in P granules (at protein level). In adult hermaphrodites, is expressed in the mitotic region, accumulates during early stages of meiotic prophase I and is slightly less abundant in maturing oocytes (at protein level).

The protein localises to the cytoplasm. The protein resides in the cytoplasmic granule. Its function is as follows. Required maternally for germline survival by forming a maternal complex with gld-3. During hermaphrodite development forms a complex with gld-3 which promotes the sperm/oocyte switch freeing the translational repressor fbf to turn off sperm promoting factors. Required for proper oocyte differentiation and oogenic meiotic arrest. Stimulates the enzymatic activity of gld-4 and together they prevent gld-1 mRNA degradation. The protein is Germline survival defective-1 of Caenorhabditis elegans.